Consider the following 554-residue polypeptide: Thermosome subunit alpha (554 aa).

The segment at 530–554 (PKKKEKKGKTGEEEEEEGGGSKFEF) is disordered.

It belongs to the TCP-1 chaperonin family. In terms of assembly, forms a Heterooligomeric complex of two stacked eight-membered rings.

In terms of biological role, molecular chaperone; binds unfolded polypeptides in vitro, and has a weak ATPase activity. The protein is Thermosome subunit alpha (thsA) of Aeropyrum pernix (strain ATCC 700893 / DSM 11879 / JCM 9820 / NBRC 100138 / K1).